A 238-amino-acid chain; its full sequence is Lactate utilization protein A (238 aa).

It belongs to the LutA/YkgE family.

Functionally, is involved in L-lactate degradation and allows cells to grow with lactate as the sole carbon source. This is Lactate utilization protein A from Geobacillus sp. (strain WCH70).